Reading from the N-terminus, the 362-residue chain is Shewanella-like protein phosphatase 1 (362 aa).

The first 23 residues, 1-23, serve as a signal peptide directing secretion; it reads MIFKKALYILLFLYIAIVKKGES. Mn(2+)-binding residues include Asp65, His67, Asp101, and Asn136. Residue His137 is the Proton donor of the active site. Mn(2+) is bound at residue His196.

This sequence belongs to the metallophosphoesterase superfamily. SLP family. The cofactor is Mn(2+).

Functionally, phosphatase which plays an essential role in the development and differentiation of the ookinete and in the formation of ookinete micronemes. This is Shewanella-like protein phosphatase 1 from Plasmodium berghei (strain Anka).